The primary structure comprises 322 residues: Malate dehydrogenase (322 aa).

NAD(+) is bound by residues 10 to 15 (GSGQIG) and D34. Substrate-binding residues include R83 and R89. NAD(+)-binding positions include N96 and 119–121 (ITN). Residues N121 and R152 each contribute to the substrate site. H176 acts as the Proton acceptor in catalysis.

It belongs to the LDH/MDH superfamily. MDH type 3 family.

The enzyme catalyses (S)-malate + NAD(+) = oxaloacetate + NADH + H(+). Catalyzes the reversible oxidation of malate to oxaloacetate. The chain is Malate dehydrogenase from Bradyrhizobium sp. (strain BTAi1 / ATCC BAA-1182).